The sequence spans 122 residues: Large ribosomal subunit protein uL14 (122 aa).

It belongs to the universal ribosomal protein uL14 family. In terms of assembly, part of the 50S ribosomal subunit. Forms a cluster with proteins L3 and L19. In the 70S ribosome, L14 and L19 interact and together make contacts with the 16S rRNA in bridges B5 and B8.

Binds to 23S rRNA. Forms part of two intersubunit bridges in the 70S ribosome. The protein is Large ribosomal subunit protein uL14 of Pelodictyon phaeoclathratiforme (strain DSM 5477 / BU-1).